The chain runs to 511 residues: Kinesin-like protein 8 (511 aa).

One can recognise a Kinesin motor domain in the interval 5 to 356 (NVRVIVRVRP…LRYSEAARRI (352 aa)). Residue 107–114 (GQKGTGKT) coordinates ATP. Phosphoserine occurs at positions 278, 279, 284, and 456. Residues 373–489 (EGELDDILTT…KLVKSQLHDY (117 aa)) adopt a coiled-coil conformation.

It belongs to the TRAFAC class myosin-kinesin ATPase superfamily. Kinesin family.

Its subcellular location is the cytoplasm. It localises to the cytoskeleton. The polypeptide is Kinesin-like protein 8 (klp8) (Schizosaccharomyces pombe (strain 972 / ATCC 24843) (Fission yeast)).